Consider the following 823-residue polypeptide: DNA ligase (823 aa).

NAD(+) is bound by residues 32–36, 81–82, and Glu-121; these read DAEYD and SL. The N6-AMP-lysine intermediate role is filled by Lys-123. NAD(+) contacts are provided by Arg-144, Glu-181, Lys-299, and Lys-323. Zn(2+) is bound by residues Cys-449, Cys-452, Cys-467, and Cys-473. The interval 528–558 is disordered; that stretch reads ETADKGSSENENGDAETVSGDLSKYNTQNGK. The BRCT domain maps to 746–823; sequence GINKAVAGKT…SEAELLTLLC (78 aa).

It belongs to the NAD-dependent DNA ligase family. LigA subfamily. Requires Mg(2+) as cofactor. Mn(2+) serves as cofactor.

It carries out the reaction NAD(+) + (deoxyribonucleotide)n-3'-hydroxyl + 5'-phospho-(deoxyribonucleotide)m = (deoxyribonucleotide)n+m + AMP + beta-nicotinamide D-nucleotide.. Functionally, DNA ligase that catalyzes the formation of phosphodiester linkages between 5'-phosphoryl and 3'-hydroxyl groups in double-stranded DNA using NAD as a coenzyme and as the energy source for the reaction. It is essential for DNA replication and repair of damaged DNA. The polypeptide is DNA ligase (Neisseria gonorrhoeae (strain NCCP11945)).